Consider the following 96-residue polypeptide: uncharacterized protein (96 aa).

Residues 1-19 (MKFLSALLLIVLLISVVFG) form the signal peptide. N-linked (GlcNAc...) asparagine glycosylation is present at Asn-20. The segment covering 27–46 (AWATTTTGGTTGSQTSPATH) has biased composition (low complexity). The segment at 27-58 (AWATTTTGGTTGSQTSPATHGGHGGNGGNGHS) is disordered. Residues 47 to 56 (GGHGGNGGNG) show a composition bias toward gly residues.

It localises to the secreted. This is an uncharacterized protein from Dictyostelium discoideum (Social amoeba).